The following is a 1029-amino-acid chain: Multidrug resistance protein MdtC (1029 aa).

Helical transmembrane passes span 15 to 35, 333 to 353, 360 to 380, 387 to 407, 431 to 451, 469 to 489, 528 to 548, 853 to 873, 897 to 917, 953 to 973, and 984 to 1004; these read ILLSIAVTLCGVLGFRLLPVA, EVEQSLAISVGLVILVVFLFL, LIPAVAVPVSLIGTFAAMYLC, LSLMALTIATGFVVDDAIVAL, VGFTVLSMSLSLVAVFLPLLL, VAIGISLVVSLTLTPMMCGWL, LVGLVLLATIALNVWLYISIP, VILILAAIATVYIVLGMLYES, AFDAPFSLIALIGIMLLIGIV, PIMMTTLAALFGALPLMIASG, and ITIVGGLVMSQLLTLYTTPVV.

This sequence belongs to the resistance-nodulation-cell division (RND) (TC 2.A.6) family. MdtC subfamily. Part of a tripartite efflux system composed of MdtA, MdtB and MdtC. MdtC forms a heteromultimer with MdtB.

The protein resides in the cell inner membrane. This Cronobacter sakazakii (strain ATCC BAA-894) (Enterobacter sakazakii) protein is Multidrug resistance protein MdtC.